The chain runs to 526 residues: MSRVAIIDFGSQFTQLLARRIRELNVYSEIFPHDIAFDYIKDSKAFILSGGPKSVLDFTGMPPIVHDIIELNKKTSVPVLGVCYGLQLLSNYFNSTIVHGCGQEFGKAILNVVKKSEMIKDVWKVGDQPYVWMSHADSVYDTPCGFEVIACSVVNNAIAMISNEERRIYGVQFHPEVYHTPDGVKLLANFVRIAGCDNNWTVESFLDEQENLIKKQVGDKKVIAALSGGVDSSVAAALTYRAIGDQLHCIFIDNGLLRYNEAEKVRQSFVDQFQMPVTIVDRSSVFLDKLQFVTDPEQKRKIIGKTFIEVFEEEANKIGNVEFLMQGTIYPDVIESGGSVGKESVTIKSHHNVGGLPDIMKLQLVEPLKLLFKDEVRLLGKKLGISDEILMRHPFPGPGLAIRIIGEITQEKVNMLQAADEIYINLIKKYNLYDVIWQAFAVLLPVKTVGVMGDSRTYGYTCALRAVTSSDGMTAECFPFGVDLETKIIFYEFLQDVSNTIVNNVQGINRVVYDTTSKPPATIEWE.

The 197-residue stretch at 3–199 (RVAIIDFGSQ…FVRIAGCDNN (197 aa)) folds into the Glutamine amidotransferase type-1 domain. The active-site Nucleophile is cysteine 83. Catalysis depends on residues histidine 174 and glutamate 176. The region spanning 200 to 392 (WTVESFLDEQ…LGISDEILMR (193 aa)) is the GMPS ATP-PPase domain. 227-233 (SGGVDSS) contacts ATP.

Homodimer.

The enzyme catalyses XMP + L-glutamine + ATP + H2O = GMP + L-glutamate + AMP + diphosphate + 2 H(+). Its pathway is purine metabolism; GMP biosynthesis; GMP from XMP (L-Gln route): step 1/1. Functionally, catalyzes the synthesis of GMP from XMP. In Ehrlichia chaffeensis (strain ATCC CRL-10679 / Arkansas), this protein is GMP synthase [glutamine-hydrolyzing].